We begin with the raw amino-acid sequence, 508 residues long: Pyruvate kinase, cytosolic isozyme (508 aa).

A substrate-binding site is contributed by R48. 4 residues coordinate K(+): N50, S52, D82, and T83. Position 50–53 (50–53 (NFSH)) interacts with ATP. ATP contacts are provided by R89 and K174. A Mg(2+)-binding site is contributed by E240. 3 residues coordinate substrate: G263, D264, and T296. D264 provides a ligand contact to Mg(2+).

This sequence belongs to the pyruvate kinase family. As to quaternary structure, homotetramer. The cofactor is Mg(2+). K(+) serves as cofactor.

The protein resides in the cytoplasm. It carries out the reaction pyruvate + ATP = phosphoenolpyruvate + ADP + H(+). It functions in the pathway carbohydrate degradation; glycolysis; pyruvate from D-glyceraldehyde 3-phosphate: step 5/5. The sequence is that of Pyruvate kinase, cytosolic isozyme from Nicotiana tabacum (Common tobacco).